Reading from the N-terminus, the 77-residue chain is U14-theraphotoxin-Cg1a 2 (77 aa).

Positions Met1–Ala21 are cleaved as a signal peptide. A propeptide spanning residues Ser22–Arg49 is cleaved from the precursor. Intrachain disulfides connect Cys50–Cys64, Cys57–Cys69, and Cys63–Cys75. Lys77 bears the Lysine amide mark.

It belongs to the neurotoxin 10 (Hwtx-1) family. 65 (Jztx-21) subfamily. As to expression, expressed by the venom gland.

It is found in the secreted. Functionally, probable ion channel inhibitor. The polypeptide is U14-theraphotoxin-Cg1a 2 (Chilobrachys guangxiensis (Chinese earth tiger tarantula)).